We begin with the raw amino-acid sequence, 294 residues long: ATP synthase gamma chain (294 aa).

Belongs to the ATPase gamma chain family. F-type ATPases have 2 components, CF(1) - the catalytic core - and CF(0) - the membrane proton channel. CF(1) has five subunits: alpha(3), beta(3), gamma(1), delta(1), epsilon(1). CF(0) has three main subunits: a, b and c.

It is found in the cell membrane. Produces ATP from ADP in the presence of a proton gradient across the membrane. The gamma chain is believed to be important in regulating ATPase activity and the flow of protons through the CF(0) complex. The protein is ATP synthase gamma chain of Opitutus terrae (strain DSM 11246 / JCM 15787 / PB90-1).